A 99-amino-acid polypeptide reads, in one-letter code: Probable non-specific lipid-transfer protein AKCS9 (99 aa).

The N-terminal stretch at 1–33 (MTMKMKMKMSVVCAVVVVALFLIDVGPVAEAVT) is a signal peptide. Intrachain disulfides connect Cys-34–Cys-68, Cys-42–Cys-56, Cys-57–Cys-92, and Cys-66–Cys-99.

Belongs to the plant LTP family. As to expression, expressed in most tissues except nodules.

Its function is as follows. Potential lipid transfer protein. This Vigna unguiculata (Cowpea) protein is Probable non-specific lipid-transfer protein AKCS9.